We begin with the raw amino-acid sequence, 912 residues long: Coiled-coil domain-containing protein 162 (912 aa).

2 coiled-coil regions span residues 1-35 (MFKS…FSFA) and 220-276 (VLLG…VVMS).

The polypeptide is Coiled-coil domain-containing protein 162 (Mus musculus (Mouse)).